The sequence spans 25 residues: M-poneritoxin-Na1b (25 aa).

The protein belongs to the non-disulfide-bridged peptide (NDBP) superfamily. Medium-length antimicrobial peptide (group 3) family. Ponericin-W subfamily. As to expression, expressed by the venom gland.

Its subcellular location is the secreted. The protein resides in the target cell membrane. Its function is as follows. Membrane-perturbating peptide with multiple activities. It is insecticidal, since it induces reversible paralysis in insects (L.cuprina) after 1 hour, but fails to kill flies. It shows a relatively strong and broad-spectrum antibacterial activity against both Gram-positive and Gram-negative bacteria (MIC&lt;20 uM). It is also anthelmintic, since it potently inhibits the larval development of the major pathogenic nematode of ruminants (H.contortus, IC(50)=2.8 uM). Interestingly, only at 10 uM, it increases adult males motility of the other nematode B.malayi for 24 hours post-treatment, followed by a reduction in motility for the rest of the experiment. It shows cytotoxic activity against HEK293 cells (EC(50)=4-6 uM) and induces hemolysis in human erythrocytes (EC(50)=40-62 uM). In addition, it causes an important increase in intracellular calcium concentration on neuronal and epithelial cell lines, which supports a non-specific membrane perturbation mechanism of action. In vivo, it induces pain by intraplantar injection into mice, suggesting a defensive function against vertebrate predators. The sequence is that of M-poneritoxin-Na1b from Neoponera apicalis (Ant).